The chain runs to 372 residues: Putative glutamate--cysteine ligase 2 (372 aa).

It belongs to the glutamate--cysteine ligase type 2 family. YbdK subfamily. Homodimer.

It catalyses the reaction L-cysteine + L-glutamate + ATP = gamma-L-glutamyl-L-cysteine + ADP + phosphate + H(+). Functionally, ATP-dependent carboxylate-amine ligase which exhibits weak glutamate--cysteine ligase activity. This is Putative glutamate--cysteine ligase 2 from Citrobacter koseri (strain ATCC BAA-895 / CDC 4225-83 / SGSC4696).